The chain runs to 728 residues: E3 ubiquitin-protein ligase TRIM36 (728 aa).

The segment at 33–84 (CPACKELFTHPLILPCQHSICHKCVKELLLTLDDSFNDVGSDNSNQSSPRLR) adopts an RING-type; degenerate zinc-finger fold. 2 B box-type zinc fingers span residues 154–192 (AIMC…WGTI) and 207–249 (PKIL…VTTM). Zn(2+) contacts are provided by C212, H215, C235, and H241. Residues 271 to 345 (ESQVKSQISE…MEEYQGLLEN (75 aa)) adopt a coiled-coil conformation. One can recognise a COS domain in the interval 356–413 (LKETDQSCFVQTAKQLHLRIQKATESLKSFRPAAQTSFEDYVVNTSKQTELLGELSFF). In terms of domain architecture, Fibronectin type-III spans 419–510 (VPEINEEQSK…RELILHTPPA (92 aa)). The B30.2/SPRY domain occupies 508-720 (PPAPVFSFLF…IQLEEPITAK (213 aa)).

The protein belongs to the TRIM/RBCC family. Interacts with CENPH. In terms of tissue distribution, highly expressed in testis, prostate and brain. Weakly expressed in kidney, lung and heart. Expressed in fetal tissues.

The protein localises to the cytoplasm. It localises to the cytoplasmic vesicle. Its subcellular location is the secretory vesicle. It is found in the acrosome. The protein resides in the cytoskeleton. It catalyses the reaction S-ubiquitinyl-[E2 ubiquitin-conjugating enzyme]-L-cysteine + [acceptor protein]-L-lysine = [E2 ubiquitin-conjugating enzyme]-L-cysteine + N(6)-ubiquitinyl-[acceptor protein]-L-lysine.. In terms of biological role, E3 ubiquitin-protein ligase which mediates ubiquitination and subsequent proteasomal degradation of target proteins. Involved in chromosome segregation and cell cycle regulation. May play a role in the acrosome reaction and fertilization. The polypeptide is E3 ubiquitin-protein ligase TRIM36 (TRIM36) (Homo sapiens (Human)).